The chain runs to 327 residues: MSTRPVEGSAIWDVLSPHSPHAAAADGKTLVWVEAGELCGHDTAESANLARIRPGLLAAFCHPKATEDDLTLITKWMAWLFLLDDRIDESDLGRDADLLDGHLQDLQGVALGIRTASGPMSRALEEIITQASAGMGDAWQLRFRRNISDYLLACVWQAAHRQAGEFPDPEVFPHWRRAFGAIMPSFDLIERTDGGALPSCVYYSRPYQSLLTAAADLVCWTNDLMTVDKEAAHGDLHNLVLVTEHDRHQDRRTASAAVSAACEQRMRAHTSARRDLTGLTAALGLPDTVRTHADDCAASLLVWVRGHLEWGLETPRYRPGTTGTGTD.

Mg(2+)-binding residues include D84, D85, N222, T226, and E230.

It belongs to the terpene synthase family.

The catalysed reaction is (2E,6E)-farnesyl diphosphate = (-)-delta-cadinene + diphosphate. In terms of biological role, catalyzes the conversion of (2E,6E)-farnesyl diphosphate into (-)-delta-cadinene. Cyclization mechanism involves an intermediate nerolidyl diphosphate leading to a helminthogermacradienyl cation. The polypeptide is (-)-delta-cadinene synthase (Streptomyces clavuligerus).